We begin with the raw amino-acid sequence, 516 residues long: Histone H4 transcription factor (516 aa).

3 C2H2-type zinc fingers span residues 15 to 39, 127 to 151, and 167 to 191; these read LQCEWGSCSFVCSAMEEFCEHVTQH, FLCLWEHCENSFDNPEWFYRHVEAH, and VLCGWKGCTCTFKDRFKLREHLRSH. The C2H2-type 4; degenerate zinc finger occupies 197-219; the sequence is VACPTCGGMFANNTKFLDHIRRQ. 5 C2H2-type zinc fingers span residues 227–249, 253–276, 282–304, 310–335, and 343–366; these read FQCSHCSKRFATERLLRDHMRNH, YKCPLCDMTCPLPSSLRNHMRFRH, FKCDCCDYSCKNLIDLRKHLDTH, YSCDFENCTFSARSLYSIKSHYRKVH, and YRCHVCDKCFTRGNNLTVHLRKKH. The interval 371 to 516 is interaction with NPAT; sequence PSGHPRFRYK…AAEEPEVQMV (146 aa). The tract at residues 372–405 is required for activation of histone H4 transcription and contributes to DNA-binding; the sequence is SGHPRFRYKEHEDGYMRLQLVRYESVELTQQLLR. 2 disordered regions span residues 429-456 and 486-516; these read TVPGEPGPQEEAEEEGGGGEGIALPASQ and PGEPPPASEPPSGGVMGELQGAAEEPEVQMV. Positions 436-445 are enriched in acidic residues; the sequence is PQEEAEEEGG.

In terms of assembly, binds MBD2 and a histone deacetylase complex. Interacts with NPAT. Post-translationally, ubiquitinated. Ubiquitination may lead to proteasome-mediated degradation.

The protein resides in the nucleus. Transcriptional repressor that binds to the consensus sequence 5'-CGGACGTT-3' and to the RB1 promoter. Transcriptional activator that promotes histone H4 gene transcription at the G1/S phase transition in conjunction with NPAT. Also activates transcription of the ATM and PRKDC genes. Autoregulates its expression by associating with its own promoter. The protein is Histone H4 transcription factor (HINFP) of Bos taurus (Bovine).